The following is a 287-amino-acid chain: Probable 18S rRNA (guanine-N(7))-methyltransferase (287 aa).

The segment at 214–287 (GVEGEEYEQQ…FSGRKRGPKF (74 aa)) is disordered. The segment covering 217 to 228 (GEEYEQQEEEDS) has biased composition (acidic residues). Residues 234–245 (SNRKRDRRRVTK) show a composition bias toward basic residues. Over residues 253-278 (KTKEWIMNKKDRQRKQGREIKNDSKF) the composition is skewed to basic and acidic residues.

It belongs to the class I-like SAM-binding methyltransferase superfamily. BUD23/WBSCR22 family.

It is found in the nucleus. The protein localises to the nucleoplasm. It localises to the cytoplasm. Its subcellular location is the perinuclear region. The enzyme catalyses a guanosine in 18S rRNA + S-adenosyl-L-methionine = an N(7)-methylguanosine in 18S rRNA + S-adenosyl-L-homocysteine. In terms of biological role, S-adenosyl-L-methionine-dependent methyltransferase that specifically methylates the N(7) position of a guanine in 18S rRNA. Important for biogenesis end export of the 40S ribosomal subunit independent on its methyltransferase activity. Its function is as follows. S-adenosyl-L-methionine-dependent methyltransferase that specifically methylates the N(7) position of a guanine in 18S rRNA. Requires the methyltransferase adapter protein TRM112 for full rRNA methyltransferase activity. Involved in the pre-rRNA processing steps leading to small-subunit rRNA production independently of its RNA-modifying catalytic activity. Important for biogenesis end export of the 40S ribosomal subunit independent on its methyltransferase activity. This chain is Probable 18S rRNA (guanine-N(7))-methyltransferase, found in Dictyostelium discoideum (Social amoeba).